The following is a 479-amino-acid chain: tRNA-dihydrouridine(20) synthase [NAD(P)+] (479 aa).

FMN contacts are provided by residues 14-16 (PMV) and Q87. Catalysis depends on C116, which acts as the Proton donor. FMN contacts are provided by residues K159, H187, 221–223 (NGD), and 245–246 (AR).

This sequence belongs to the Dus family. Dus2 subfamily. It depends on FMN as a cofactor.

It localises to the cytoplasm. Its subcellular location is the nucleus. The catalysed reaction is 5,6-dihydrouridine(20) in tRNA + NADP(+) = uridine(20) in tRNA + NADPH + H(+). It carries out the reaction 5,6-dihydrouridine(20) in tRNA + NAD(+) = uridine(20) in tRNA + NADH + H(+). The enzyme catalyses a 5,6-dihydrouridine in mRNA + NAD(+) = a uridine in mRNA + NADH + H(+). It catalyses the reaction a 5,6-dihydrouridine in mRNA + NADP(+) = a uridine in mRNA + NADPH + H(+). In terms of biological role, catalyzes the NADPH-dependent synthesis of dihydrouridine, a modified base found in the D-loop of most tRNAs. Specifically modifies U20 in cytoplasmic tRNAs. Also able to mediate dihydrouridylation of some mRNAs, thereby affecting their translation. This Schizosaccharomyces pombe (strain 972 / ATCC 24843) (Fission yeast) protein is tRNA-dihydrouridine(20) synthase [NAD(P)+].